A 348-amino-acid polypeptide reads, in one-letter code: Phospho-2-dehydro-3-deoxyheptonate aldolase, Trp-sensitive (348 aa).

It belongs to the class-I DAHP synthase family.

The catalysed reaction is D-erythrose 4-phosphate + phosphoenolpyruvate + H2O = 7-phospho-2-dehydro-3-deoxy-D-arabino-heptonate + phosphate. It participates in metabolic intermediate biosynthesis; chorismate biosynthesis; chorismate from D-erythrose 4-phosphate and phosphoenolpyruvate: step 1/7. Its function is as follows. Stereospecific condensation of phosphoenolpyruvate (PEP) and D-erythrose-4-phosphate (E4P) giving rise to 3-deoxy-D-arabino-heptulosonate-7-phosphate (DAHP). This chain is Phospho-2-dehydro-3-deoxyheptonate aldolase, Trp-sensitive (aroH), found in Escherichia coli O157:H7.